A 117-amino-acid polypeptide reads, in one-letter code: UPF0342 protein lwe2240 (117 aa).

The protein belongs to the UPF0342 family.

In Listeria welshimeri serovar 6b (strain ATCC 35897 / DSM 20650 / CCUG 15529 / CIP 8149 / NCTC 11857 / SLCC 5334 / V8), this protein is UPF0342 protein lwe2240.